Consider the following 328-residue polypeptide: 4-hydroxythreonine-4-phosphate dehydrogenase (328 aa).

Positions 134 and 135 each coordinate substrate. The a divalent metal cation site is built by His-164, His-209, and His-264. Residues Lys-272, Asn-281, and Arg-290 each coordinate substrate.

This sequence belongs to the PdxA family. In terms of assembly, homodimer. Zn(2+) is required as a cofactor. Requires Mg(2+) as cofactor. The cofactor is Co(2+).

It localises to the cytoplasm. It catalyses the reaction 4-(phosphooxy)-L-threonine + NAD(+) = 3-amino-2-oxopropyl phosphate + CO2 + NADH. Its pathway is cofactor biosynthesis; pyridoxine 5'-phosphate biosynthesis; pyridoxine 5'-phosphate from D-erythrose 4-phosphate: step 4/5. In terms of biological role, catalyzes the NAD(P)-dependent oxidation of 4-(phosphooxy)-L-threonine (HTP) into 2-amino-3-oxo-4-(phosphooxy)butyric acid which spontaneously decarboxylates to form 3-amino-2-oxopropyl phosphate (AHAP). In Shewanella denitrificans (strain OS217 / ATCC BAA-1090 / DSM 15013), this protein is 4-hydroxythreonine-4-phosphate dehydrogenase.